Reading from the N-terminus, the 514-residue chain is 2-isopropylmalate synthase (514 aa).

One can recognise a Pyruvate carboxyltransferase domain in the interval 5–268; it reads LIIFDTTLRD…DVGIDTTQIV (264 aa). Residues aspartate 14, histidine 202, histidine 204, and asparagine 239 each contribute to the Mn(2+) site. Residues 395 to 514 form a regulatory domain region; that stretch reads KFVSLSQHSE…KDDKLNPQRA (120 aa).

Belongs to the alpha-IPM synthase/homocitrate synthase family. LeuA type 1 subfamily. As to quaternary structure, homodimer. It depends on Mn(2+) as a cofactor.

The protein resides in the cytoplasm. The catalysed reaction is 3-methyl-2-oxobutanoate + acetyl-CoA + H2O = (2S)-2-isopropylmalate + CoA + H(+). The protein operates within amino-acid biosynthesis; L-leucine biosynthesis; L-leucine from 3-methyl-2-oxobutanoate: step 1/4. Catalyzes the condensation of the acetyl group of acetyl-CoA with 3-methyl-2-oxobutanoate (2-ketoisovalerate) to form 3-carboxy-3-hydroxy-4-methylpentanoate (2-isopropylmalate). The protein is 2-isopropylmalate synthase of Burkholderia vietnamiensis (strain G4 / LMG 22486) (Burkholderia cepacia (strain R1808)).